The primary structure comprises 184 residues: Large ribosomal subunit protein uL6 (184 aa).

The protein belongs to the universal ribosomal protein uL6 family. As to quaternary structure, part of the 50S ribosomal subunit.

In terms of biological role, this protein binds to the 23S rRNA, and is important in its secondary structure. It is located near the subunit interface in the base of the L7/L12 stalk, and near the tRNA binding site of the peptidyltransferase center. In Thermosipho melanesiensis (strain DSM 12029 / CIP 104789 / BI429), this protein is Large ribosomal subunit protein uL6.